Reading from the N-terminus, the 413-residue chain is Cardiolipin synthase B (413 aa).

PLD phosphodiesterase domains follow at residues 108–135 (IFRRMHRKIVVIDDRIAFVGGINYSAEH) and 285–312 (RRRPLHGKVALMDDHWATVGSSNLDPLS). Active-site residues include His113, Lys115, Asp120, His290, Lys292, and Asp297. Residues 388–413 (AQVPPPAQPEMETQDRVDPENSGVKP) are disordered.

The protein belongs to the phospholipase D family. Cardiolipin synthase subfamily. ClsB sub-subfamily.

The protein resides in the cell membrane. It catalyses the reaction 2 a 1,2-diacyl-sn-glycero-3-phospho-(1'-sn-glycerol) = a cardiolipin + glycerol. Catalyzes the phosphatidyl group transfer from one phosphatidylglycerol molecule to another to form cardiolipin (CL) (diphosphatidylglycerol) and glycerol. In Salmonella typhi, this protein is Cardiolipin synthase B.